A 180-amino-acid polypeptide reads, in one-letter code: Ribulose bisphosphate carboxylase small subunit, chloroplastic (180 aa).

The transit peptide at 1 to 57 directs the protein to the chloroplast; sequence MVSSMMVSSAATFTRASPAQSSMVAPFTGLKSASAFPVTRKPNADLSHLPSNGGRVQ.

This sequence belongs to the RuBisCO small chain family. As to quaternary structure, heterohexadecamer of 8 large and 8 small subunits.

Its subcellular location is the plastid. It localises to the chloroplast. In terms of biological role, ruBisCO catalyzes two reactions: the carboxylation of D-ribulose 1,5-bisphosphate, the primary event in carbon dioxide fixation, as well as the oxidative fragmentation of the pentose substrate. Both reactions occur simultaneously and in competition at the same active site. Although the small subunit is not catalytic it is essential for maximal activity. This is Ribulose bisphosphate carboxylase small subunit, chloroplastic from Musa acuminata (Banana).